Here is a 607-residue protein sequence, read N- to C-terminus: UvrABC system protein C (607 aa).

Positions Gly-16–Ile-94 constitute a GIY-YIG domain. The UVR domain occupies Asn-203 to Val-238.

It belongs to the UvrC family. As to quaternary structure, interacts with UvrB in an incision complex.

It is found in the cytoplasm. The UvrABC repair system catalyzes the recognition and processing of DNA lesions. UvrC both incises the 5' and 3' sides of the lesion. The N-terminal half is responsible for the 3' incision and the C-terminal half is responsible for the 5' incision. In Ectopseudomonas mendocina (strain ymp) (Pseudomonas mendocina), this protein is UvrABC system protein C.